The chain runs to 197 residues: Protein TIFY 9 (197 aa).

The span at 57-73 shows a compositional bias: polar residues; it reads STGNNSDSSAKSRSVPS. Positions 57 to 84 are disordered; it reads STGNNSDSSAKSRSVPSTPREDQPQIPI. In terms of domain architecture, Tify spans 98-132; it reads LVSGTVPMTIFYNGSVSVFQVSRNKAGEIMKVANE. A Jas motif is present at residues 168–193; it reads PIARRKSLQRFLEKRKERLVSTSPYY. A Nuclear localization signal motif is present at residues 170–177; the sequence is ARRKSLQR.

This sequence belongs to the TIFY/JAZ family. In terms of assembly, homo- and heterodimer. Interacts with MYC2, MYC3, MYC4, AFPH2/NINJA, TIFY10A/JAZ1, TIFY10B/JAZ2, TIFY6B/JAZ3, TIFY6A/JAZ4, TIFY11B/JAZ6, TIFY5A/JAZ8, TIFY7/JAZ9, TIFY3A/JAZ11 and TIFY3B/JAZ12. Isoform 1 and isoform 2 interact with COI1. Isoform 3 does not interact with COI1. Interacts with RHD6 and RSL1. In terms of processing, ubiquitinated. Targeted for degradation by the SCF(COI1) E3 ubiquitin ligase-proteasome pathway during jasmonate signaling.

Its subcellular location is the nucleus. Functionally, repressor of jasmonate (JA) responses that lacks the entire Jas domain and possesses severe JA insensitivity and resistance to JA-induced degradation. Acts as an endogenous repressor of JA signal output in JA-stimulated cells. Modulator of JA-controlled growth inhibition in response to wounding. Repressor of jasmonate (JA) responses that lacks part of the Jas domain and possesses JA insensitivity and partial resistance to JA-induced degradation. Its function is as follows. Repressor of jasmonate (JA) responses. Interacts with and suppresses RHD6 and RSL1 transcription factor activities to negatively regulate jasmonate-stimulated root hair development. The sequence is that of Protein TIFY 9 (TIFY9) from Arabidopsis thaliana (Mouse-ear cress).